The following is a 308-amino-acid chain: Folate transporter 1, chloroplastic (308 aa).

Solcar repeat units follow at residues 4-94 (SWQW…AKQR), 104-192 (LSPA…LRKI), and 213-299 (ADYA…VLKL). 6 helical membrane-spanning segments follow: residues 10–30 (ATAGAVAGFATVAAMHSLDVV), 74–91 (VIGSTVSWGLYFFFYGRA), 110–130 (LASAAEAGALVCLCTNPIWLV), 164–184 (ALYKGIVPGLVLVSHGAIQFT), 216–236 (AALGGSSKVAAVLLTYPFQVI), and 274–293 (GLTANLLKNVPASSITFIVY).

Belongs to the mitochondrial carrier (TC 2.A.29) family. Ubiquitous.

Its subcellular location is the plastid. The protein localises to the chloroplast membrane. In terms of biological role, mediates folate import into chloroplast. The chain is Folate transporter 1, chloroplastic (FOLT1) from Arabidopsis thaliana (Mouse-ear cress).